Reading from the N-terminus, the 347-residue chain is Haptoglobin (347 aa).

The signal sequence occupies residues 1-18; sequence MRALGAVVTLLLWGQLFA. A Sushi domain is found at 31-88; sequence DSCPKPPEIANGYVEHLVRYRCRQFYRLRAEGDGVYTLNDEKQWVNTVAGEKLPECEA. 4 disulfides stabilise this stretch: cysteine 52–cysteine 86, cysteine 90–cysteine 207, cysteine 250–cysteine 281, and cysteine 292–cysteine 322. Positions 103-345 constitute a Peptidase S1 domain; that stretch reads IIGGSMDAKG…LKDWVQETMA (243 aa). N-linked (GlcNAc...) asparagine glycans are attached at residues asparagine 148, asparagine 182, asparagine 256, and asparagine 264. The tract at residues 259–264 is interaction with CD163; that stretch reads VPEKKN.

It belongs to the peptidase S1 family. In terms of assembly, tetramer of two alpha and two beta chains; disulfide-linked. The hemoglobin/haptoglobin complex is composed of a haptoglobin dimer bound to two hemoglobin alpha-beta dimers. Interacts with CD163. Interacts with ERGIC3. Expressed by the liver and secreted in plasma.

Its subcellular location is the secreted. In terms of biological role, as a result of hemolysis, hemoglobin is found to accumulate in the kidney and is secreted in the urine. Haptoglobin captures, and combines with free plasma hemoglobin to allow hepatic recycling of heme iron and to prevent kidney damage. Haptoglobin also acts as an antioxidant, has antibacterial activity and plays a role in modulating many aspects of the acute phase response. Hemoglobin/haptoglobin complexes are rapidly cleared by the macrophage CD163 scavenger receptor expressed on the surface of liver Kupfer cells through an endocytic lysosomal degradation pathway. This is Haptoglobin (Hp) from Mus musculus (Mouse).